Reading from the N-terminus, the 548-residue chain is 1,3-beta-glucanosyltransferase gel4 (548 aa).

The first 25 residues, 1–25 (MKFVYAAAGASLVGSALATLPVIEA), serve as a signal peptide directing secretion. N-linked (GlcNAc...) asparagine glycans are attached at residues asparagine 51 and asparagine 69. Cysteine 88 and cysteine 117 are joined by a disulfide. Residues tyrosine 106, 133–141 (SAPSESINR), asparagine 174, and glutamate 175 each bind (1,3-beta-D-glucosyl)n. Catalysis depends on glutamate 175, which acts as the Proton donor. A glycan (N-linked (GlcNAc...) asparagine) is linked at asparagine 181. (1,3-beta-D-glucosyl)n-binding residues include aspartate 217 and arginine 222. Cystine bridges form between cysteine 231–cysteine 364, cysteine 249–cysteine 280, cysteine 386–cysteine 437, cysteine 395–cysteine 461, and cysteine 414–cysteine 419. Catalysis depends on glutamate 277, which acts as the Nucleophile. Tyrosine 309 provides a ligand contact to (1,3-beta-D-glucosyl)n. An N-linked (GlcNAc...) asparagine glycan is attached at asparagine 425. A lipid anchor (GPI-like-anchor amidated alanine) is attached at alanine 519. The propeptide at 520 to 548 (SPMAVKVGNWQFGAYIATALFAGVGMLVL) is removed in mature form.

This sequence belongs to the glycosyl hydrolase 72 family. In terms of processing, the GPI-like anchor contains a phosphoceramide lipid group.

Its subcellular location is the cell membrane. Its function is as follows. Splits internally a 1,3-beta-glucan molecule and transfers the newly generated reducing end (the donor) to the non-reducing end of another 1,3-beta-glucan molecule (the acceptor) forming a 1,3-beta linkage, resulting in the elongation of 1,3-beta-glucan chains in the cell wall. Involved in cell wall morphogenesis. The polypeptide is 1,3-beta-glucanosyltransferase gel4 (gel4) (Aspergillus fumigatus (strain ATCC MYA-4609 / CBS 101355 / FGSC A1100 / Af293) (Neosartorya fumigata)).